Here is a 315-residue protein sequence, read N- to C-terminus: Methionyl-tRNA formyltransferase (315 aa).

(6S)-5,6,7,8-tetrahydrofolate is bound at residue 113–116; that stretch reads SLLP.

The protein belongs to the Fmt family.

It catalyses the reaction L-methionyl-tRNA(fMet) + (6R)-10-formyltetrahydrofolate = N-formyl-L-methionyl-tRNA(fMet) + (6S)-5,6,7,8-tetrahydrofolate + H(+). Its function is as follows. Attaches a formyl group to the free amino group of methionyl-tRNA(fMet). The formyl group appears to play a dual role in the initiator identity of N-formylmethionyl-tRNA by promoting its recognition by IF2 and preventing the misappropriation of this tRNA by the elongation apparatus. This is Methionyl-tRNA formyltransferase from Escherichia coli (strain SMS-3-5 / SECEC).